A 611-amino-acid polypeptide reads, in one-letter code: Protein Spindly-A (611 aa).

Residues 1-390 are a coiled coil; the sequence is MEESETVLKL…KENEKIKDEL (390 aa). The disordered stretch occupies residues 487–611; the sequence is TCTAESTDGR…PNATTQCPQQ (125 aa). The span at 493–511 shows a compositional bias: basic and acidic residues; the sequence is TDGRIHSKEDLSLSTKEQD. The segment covering 552-567 has biased composition (polar residues); sequence HNCSVTSASPRSTSED. Basic and acidic residues predominate over residues 570 to 583; that stretch reads SESKRFDEEQEKRK. Positions 602-611 are enriched in polar residues; that stretch reads PNATTQCPQQ.

Belongs to the Spindly family.

It localises to the chromosome. The protein resides in the centromere. It is found in the kinetochore. Required for the localization of dynein and dynactin to the mitotic kintochore. Dynein is believed to control the initial lateral interaction between the kinetochore and spindle microtubules and to facilitate the subsequent formation of end-on kinetochore-microtubule attachments mediated by the NDC80 complex. This Xenopus laevis (African clawed frog) protein is Protein Spindly-A (spdl1-a).